Reading from the N-terminus, the 123-residue chain is Large ribosomal subunit protein uL24 (123 aa).

A disordered region spans residues 100–123 (RRPDGSTYKAERSVRISRKTGKEI).

It belongs to the universal ribosomal protein uL24 family. As to quaternary structure, part of the 50S ribosomal subunit.

Its function is as follows. One of two assembly initiator proteins, it binds directly to the 5'-end of the 23S rRNA, where it nucleates assembly of the 50S subunit. In terms of biological role, one of the proteins that surrounds the polypeptide exit tunnel on the outside of the subunit. This is Large ribosomal subunit protein uL24 from Nocardioides sp. (strain ATCC BAA-499 / JS614).